The chain runs to 206 residues: MARYLGPKLKLSRREGTDLFLKSGVRAIDTKCKIGQAPGQHGARKPRLSDYGVQLREKQKVRRIYGVLERQFRNYYKEAARLKGNTGENLLALLEGRLDNVVYRMGFGATRAEARQLVSHKAIMVNGRVVNIASYQVSPNDVVSIREKAKKQSRVKAALELAEQREKPTWLEVDAGKMEGTYKRKPERSDLSADINEHLIVELYSK.

Positions 96–156 (GRLDNVVYRM…EKAKKQSRVK (61 aa)) constitute an S4 RNA-binding domain.

It belongs to the universal ribosomal protein uS4 family. In terms of assembly, part of the 30S ribosomal subunit. Contacts protein S5. The interaction surface between S4 and S5 is involved in control of translational fidelity.

Functionally, one of the primary rRNA binding proteins, it binds directly to 16S rRNA where it nucleates assembly of the body of the 30S subunit. With S5 and S12 plays an important role in translational accuracy. The chain is Small ribosomal subunit protein uS4 from Salmonella typhi.